The sequence spans 249 residues: Putative NAD(+)--arginine ADP-ribosyltransferase Vis (249 aa).

The first 18 residues, 1–18, serve as a signal peptide directing secretion; the sequence is MNTRFLLLLCCLSFTTFS. A TR mART core domain is found at 31–223; sequence EEEVTQLAED…IGVETVKASA (193 aa). Residues 68 to 80, 117 to 120, and E137 contribute to the NAD(+) site; these read SISG…DYLR and RGTW. Residue R117 is part of the active site. Active-site residues include S142 and E191. Residue E191 coordinates NAD(+).

Belongs to the Arg-specific ADP-ribosyltransferase family.

The protein localises to the secreted. The enzyme catalyses L-arginyl-[protein] + NAD(+) = N(omega)-(ADP-D-ribosyl)-L-arginyl-[protein] + nicotinamide + H(+). Its function is as follows. A probable mono(ADP-ribosyl)transferase, it may ADP-ribosylate Arg in target protein(s). Upon expression in yeast cells causes cell death. The polypeptide is Putative NAD(+)--arginine ADP-ribosyltransferase Vis (Vibrio splendidus (strain 12B01)).